Consider the following 555-residue polypeptide: Carboxylesterase patB (555 aa).

A signal peptide spans 1 to 16 (MLFTASLLLLLPWASA). Asparagine 37 and asparagine 75 each carry an N-linked (GlcNAc...) asparagine glycan. Residue serine 258 is the Acyl-ester intermediate of the active site. Serine 258 provides a ligand contact to substrate. Residue asparagine 311 is glycosylated (N-linked (GlcNAc...) asparagine). The Charge relay system role is filled by glutamate 380. N-linked (GlcNAc...) asparagine glycosylation is found at asparagine 388 and asparagine 491.

Belongs to the type-B carboxylesterase/lipase family.

The protein localises to the cytoplasm. It is found in the cytosol. It carries out the reaction a carboxylic ester + H2O = an alcohol + a carboxylate + H(+). It participates in mycotoxin biosynthesis; patulin biosynthesis. In terms of biological role, carboxylesterase; part of the gene cluster that mediates the biosynthesis of patulin, an acetate-derived tetraketide mycotoxin produced by several fungal species that shows antimicrobial properties against several bacteria. The function of patB in patulin synthesis has still to be characterized. The pathway begins with the synthesis of 6-methylsalicylic acid by the polyketide synthase (PKS) patK via condensation of acetate and malonate units. The 6-methylsalicylic acid decarboxylase patG then catalyzes the decarboxylation of 6-methylsalicylic acid to yield m-cresol (also known as 3-methylphenol). These first reactions occur in the cytosol. The intermediate m-cresol is then transported into the endoplasmic reticulum where the cytochrome P450 monooxygenase patH converts it to m-hydroxybenzyl alcohol, which is further converted to gentisyl alcohol by the cytochrome P450 monooxygenase patI. The oxidoreductases patJ and patO further convert gentisyl alcohol to isoepoxydon in the vacuole. PatN catalyzes then the transformation of isoepoxydon into phyllostine. The cluster protein patF is responsible for the conversion from phyllostine to neopatulin whereas the alcohol dehydrogenase patD converts neopatulin to E-ascladiol. The steps between isoepoxydon and E-ascladiol occur in the cytosol, and E-ascladiol is probably secreted to the extracellular space by one of the cluster-specific transporters patC or patM. Finally, the secreted patulin synthase patE catalyzes the conversion of E-ascladiol to patulin. The protein is Carboxylesterase patB of Aspergillus clavatus (strain ATCC 1007 / CBS 513.65 / DSM 816 / NCTC 3887 / NRRL 1 / QM 1276 / 107).